We begin with the raw amino-acid sequence, 359 residues long: Fructose-bisphosphate aldolase class 2 (359 aa).

D-glyceraldehyde 3-phosphate is bound at residue Ser61. Catalysis depends on Asp110, which acts as the Proton donor. His111, Asp145, Glu175, and His227 together coordinate Zn(2+). Gly228 provides a ligand contact to dihydroxyacetone phosphate. His265 lines the Zn(2+) pocket. Dihydroxyacetone phosphate is bound by residues 266 to 268 and 287 to 290; these read GGS and NIDT.

Belongs to the class II fructose-bisphosphate aldolase family. The cofactor is Zn(2+).

It carries out the reaction beta-D-fructose 1,6-bisphosphate = D-glyceraldehyde 3-phosphate + dihydroxyacetone phosphate. It functions in the pathway carbohydrate degradation; glycolysis; D-glyceraldehyde 3-phosphate and glycerone phosphate from D-glucose: step 4/4. Functionally, catalyzes the aldol condensation of dihydroxyacetone phosphate (DHAP or glycerone-phosphate) with glyceraldehyde 3-phosphate (G3P) to form fructose 1,6-bisphosphate (FBP) in gluconeogenesis and the reverse reaction in glycolysis. The polypeptide is Fructose-bisphosphate aldolase class 2 (fbaA) (Buchnera aphidicola subsp. Schizaphis graminum (strain Sg)).